Reading from the N-terminus, the 308-residue chain is Quinolinate synthase (308 aa).

Iminosuccinate is bound by residues H21 and S38. C83 serves as a coordination point for [4Fe-4S] cluster. Iminosuccinate is bound by residues 109–111 (YIN) and S126. [4Fe-4S] cluster is bound at residue C170. Iminosuccinate-binding positions include 196 to 198 (HPE) and T213. C263 lines the [4Fe-4S] cluster pocket.

Belongs to the quinolinate synthase family. Type 2 subfamily. The cofactor is [4Fe-4S] cluster.

It is found in the cytoplasm. It carries out the reaction iminosuccinate + dihydroxyacetone phosphate = quinolinate + phosphate + 2 H2O + H(+). It participates in cofactor biosynthesis; NAD(+) biosynthesis; quinolinate from iminoaspartate: step 1/1. Catalyzes the condensation of iminoaspartate with dihydroxyacetone phosphate to form quinolinate. The polypeptide is Quinolinate synthase (Sulfurisphaera tokodaii (strain DSM 16993 / JCM 10545 / NBRC 100140 / 7) (Sulfolobus tokodaii)).